The primary structure comprises 428 residues: Putative UDP-glucose 6-dehydrogenase YtcA (428 aa).

Residues 1-23 (MKICVVGAGYVGLTLSAALASIG) form the signal peptide. Residues 2 to 19 (KICVVGAGYVGLTLSAAL), Val11, Asp30, Lys35, Thr118, and Glu152 each bind NAD(+). Substrate-binding positions include 148–152 (EFLRE), Lys203, Asn207, 248–252 (FLQAG), and Gly256. Residue Cys259 is the Nucleophile of the active site. Lys262 is a binding site for NAD(+). A substrate-binding site is contributed by Lys319. Arg326 lines the NAD(+) pocket.

The protein belongs to the UDP-glucose/GDP-mannose dehydrogenase family.

The enzyme catalyses UDP-alpha-D-glucose + 2 NAD(+) + H2O = UDP-alpha-D-glucuronate + 2 NADH + 3 H(+). It functions in the pathway nucleotide-sugar biosynthesis; UDP-alpha-D-glucuronate biosynthesis; UDP-alpha-D-glucuronate from UDP-alpha-D-glucose: step 1/1. In terms of biological role, catalyzes the conversion of UDP-glucose into UDP-glucuronate, one of the precursors of teichuronic acid. This chain is Putative UDP-glucose 6-dehydrogenase YtcA (ytcA), found in Bacillus subtilis (strain 168).